The following is a 226-amino-acid chain: Chalcone--flavanone isomerase (226 aa).

The substrate site is built by T51, N116, and S194.

The protein belongs to the chalcone isomerase family.

The catalysed reaction is a chalcone = a flavanone.. It functions in the pathway secondary metabolite biosynthesis; flavonoid biosynthesis. Catalyzes the intramolecular cyclization of bicyclic chalcones into tricyclic (S)-flavanones. Responsible for the isomerization of 4,2',4',6'-tetrahydroxychalcone (also termed chalcone) into naringenin. This chain is Chalcone--flavanone isomerase (CHI), found in Canna generalis (Canna lily).